Here is a 1760-residue protein sequence, read N- to C-terminus: Cilia- and flagella-associated protein 44 (1760 aa).

5 WD repeats span residues 119-160 (GATK…MVLR), 163-202 (CHNT…TGLK), 213-251 (LEIS…CCFA), 276-315 (CHEG…VAEG), and 388-427 (FNGG…ELYK). The segment covering 1155–1165 (RQEEKLREQTA) has biased composition (basic and acidic residues). The tract at residues 1155-1224 (RQEEKLREQT…FGTAAARTRS (70 aa)) is disordered. The span at 1181-1190 (PATNTDTSGA) shows a compositional bias: polar residues. A compositionally biased stretch (basic and acidic residues) spans 1194-1205 (ATRRSEGEDSRK). A coiled-coil region spans residues 1348–1389 (YDEARNSRDRCLREMEELQRLVQDQTASIEKLQEANKVFRRE). The interval 1420-1444 (HSDMSGNDDDITSDDDDDDDMGEDE) is disordered. Over residues 1425 to 1444 (GNDDDITSDDDDDDDMGEDE) the composition is skewed to acidic residues.

It belongs to the CFAP44 family.

It localises to the cell projection. The protein localises to the cilium. Its subcellular location is the flagellum. It is found in the cytoplasm. The protein resides in the cytoskeleton. It localises to the flagellum axoneme. Its function is as follows. Flagellar protein involved in flagellum axoneme organization and function. This Trypanosoma brucei brucei (strain 927/4 GUTat10.1) protein is Cilia- and flagella-associated protein 44.